The primary structure comprises 1551 residues: Pentafunctional AROM polypeptide 2 (1551 aa).

The interval 1 to 379 (MSIEKVSILG…YESKAHQIFK (379 aa)) is 3-dehydroquinate synthase. NAD(+) contacts are provided by residues 42–44 (DTN), 80–83 (ENHK), 111–113 (GGV), and Asp-116. Arg-127 lines the 7-phospho-2-dehydro-3-deoxy-D-arabino-heptonate pocket. 136 to 137 (TT) contacts NAD(+). 2 residues coordinate 7-phospho-2-dehydro-3-deoxy-D-arabino-heptonate: Asp-143 and Lys-149. Lys-158 is a binding site for NAD(+). Asn-159 is a binding site for 7-phospho-2-dehydro-3-deoxy-D-arabino-heptonate. NAD(+) contacts are provided by residues 176 to 179 (FLQT) and Asn-187. Glu-191 provides a ligand contact to Zn(2+). Residues 191–194 (EVVK) and Lys-243 each bind 7-phospho-2-dehydro-3-deoxy-D-arabino-heptonate. The Proton acceptor; for 3-dehydroquinate synthase activity role is filled by Glu-253. Residues 257 to 261 (RNLLN) and His-264 each bind 7-phospho-2-dehydro-3-deoxy-D-arabino-heptonate. His-264 is a binding site for Zn(2+). His-268 (proton acceptor; for 3-dehydroquinate synthase activity) is an active-site residue. His-280 and Lys-351 together coordinate 7-phospho-2-dehydro-3-deoxy-D-arabino-heptonate. Zn(2+) is bound at residue His-280. Positions 392-835 (VHPFANRHPE…WDVLHSKFNA (444 aa)) are EPSP synthase. A shikimate kinase region spans residues 854–1044 (DRSIVIIGMR…LPATRSTFVT (191 aa)). 861–868 (GMRAAGKT) contributes to the ATP binding site. Residues 1045 to 1258 (LTYPDLRKVP…IGVGQLSLKE (214 aa)) are 3-dehydroquinase. Catalysis depends on His-1162, which acts as the Proton acceptor; for 3-dehydroquinate dehydratase activity. Lys-1191 acts as the Schiff-base intermediate with substrate; for 3-dehydroquinate dehydratase activity in catalysis. The tract at residues 1271 to 1551 (EKEFWVVGFP…KVIHSAVLNE (281 aa)) is shikimate dehydrogenase.

This sequence in the N-terminal section; belongs to the sugar phosphate cyclases superfamily. Dehydroquinate synthase family. In the 2nd section; belongs to the EPSP synthase family. It in the 3rd section; belongs to the shikimate kinase family. The protein in the 4th section; belongs to the type-I 3-dehydroquinase family. This sequence in the C-terminal section; belongs to the shikimate dehydrogenase family. Homodimer. Zn(2+) serves as cofactor.

Its subcellular location is the cytoplasm. It carries out the reaction 7-phospho-2-dehydro-3-deoxy-D-arabino-heptonate = 3-dehydroquinate + phosphate. The enzyme catalyses 3-dehydroquinate = 3-dehydroshikimate + H2O. It catalyses the reaction shikimate + NADP(+) = 3-dehydroshikimate + NADPH + H(+). The catalysed reaction is shikimate + ATP = 3-phosphoshikimate + ADP + H(+). It carries out the reaction 3-phosphoshikimate + phosphoenolpyruvate = 5-O-(1-carboxyvinyl)-3-phosphoshikimate + phosphate. Its pathway is metabolic intermediate biosynthesis; chorismate biosynthesis; chorismate from D-erythrose 4-phosphate and phosphoenolpyruvate: step 2/7. It participates in metabolic intermediate biosynthesis; chorismate biosynthesis; chorismate from D-erythrose 4-phosphate and phosphoenolpyruvate: step 3/7. It functions in the pathway metabolic intermediate biosynthesis; chorismate biosynthesis; chorismate from D-erythrose 4-phosphate and phosphoenolpyruvate: step 4/7. The protein operates within metabolic intermediate biosynthesis; chorismate biosynthesis; chorismate from D-erythrose 4-phosphate and phosphoenolpyruvate: step 5/7. Its pathway is metabolic intermediate biosynthesis; chorismate biosynthesis; chorismate from D-erythrose 4-phosphate and phosphoenolpyruvate: step 6/7. Functionally, the AROM polypeptide catalyzes 5 consecutive enzymatic reactions in prechorismate polyaromatic amino acid biosynthesis. The chain is Pentafunctional AROM polypeptide 2 from Lodderomyces elongisporus (strain ATCC 11503 / CBS 2605 / JCM 1781 / NBRC 1676 / NRRL YB-4239) (Yeast).